We begin with the raw amino-acid sequence, 712 residues long: Solute carrier organic anion transporter family member 1C1 (712 aa).

The Cytoplasmic segment spans residues 1–43 (MDTSSKENIQLFCKTSVQPVGRPSFKTEYPSSEEKQPCCGELK). The helical transmembrane segment at 44 to 63 (VFLCALSFVYFAKALAEGYL) threads the bilayer. Residues 64 to 82 (KSTITQIERRFDIPSSLVG) lie on the Extracellular side of the membrane. Residues 83–103 (VIDGSFEIGNLLVITFVSYFG) form a helical membrane-spanning segment. Residues 104-109 (AKLHRP) are Cytoplasmic-facing. The helical transmembrane segment at 110-134 (KIIGAGCVIMGVGTLLIAMPQFFME) threads the bilayer. The Extracellular segment spans residues 135 to 184 (QYKYERYSPSSNSTLSISPCLLESSSQLPVSVMEKSKSKISNECEVDTSS). Asn-146 carries an N-linked (GlcNAc...) asparagine glycan. The chain crosses the membrane as a helical span at residues 185–213 (SMWIYVFLGNLLRGIGETPIQPLGIAYLD). Topologically, residues 214–232 (DFASEDNAAFYIGCVQTVA) are cytoplasmic. The helical transmembrane segment at 233–253 (IIGPIFGFLLGSLCAKLYVDI) threads the bilayer. At 254–271 (GFVNLDHITITPKDPQWV) the chain is on the extracellular side. Residues 272–296 (GAWWLGYLIAGIISLLAAVPFWYLP) traverse the membrane as a helical segment. At 297–348 (KSLPRSQSREDSNSSSEKSKFIIDDHTDYQTPQGENAKIMEMARDFLPSLKN) the chain is on the cytoplasmic side. A helical transmembrane segment spans residues 349–370 (LFGNPVYFLYLCTSTVQFNSLF). Over 371–390 (GMVTYKPKYIEQQYGQSSSR) the chain is Extracellular. The helical transmembrane segment at 391–414 (ANFVIGLINIPAVALGIFSGGIVM) threads the bilayer. The Cytoplasmic segment spans residues 415–418 (KKFR). A helical transmembrane segment spans residues 419–442 (ISVCGAAKLYLGSSVFGYLLFLSL). Residues 443–554 (FALGCENSDV…NGCPQMFLYF (112 aa)) lie on the Extracellular side of the membrane. A Kazal-like domain is found at 470 to 525 (RALFSDCNSRCKCSETKWEPMCGENGITYVSACLAGCQTSNRSGKNIIFYNCTCVG). Disulfide bonds link Cys-476-Cys-506, Cys-482-Cys-502, and Cys-491-Cys-523. Residues Asn-510, Asn-520, and Asn-533 are each glycosylated (N-linked (GlcNAc...) asparagine). A helical membrane pass occupies residues 555-577 (LVISVITSYTLSLGGIPGYILLL). Over 578 to 586 (RCIKPQLKS) the chain is Cytoplasmic. A helical transmembrane segment spans residues 587-612 (FALGIYTLAIRVLAGIPAPVYFGVLI). The Extracellular portion of the chain corresponds to 613 to 646 (DTSCLKWGFKRCGSRGSCRLYDSNVFRHIYLGLT). A helical transmembrane segment spans residues 647-664 (VILGTVSILLSIAVLFIL). Residues 665-712 (KKNYVSKHRSFITKRERTMVSTRFQKENYTTSDHLLQPNYWPGKETQL) lie on the Cytoplasmic side of the membrane.

The protein belongs to the organo anion transporter (TC 2.A.60) family. As to expression, highly expressed in brain and in Leydig cells in testis. Localized in nests of Leydig cells (at protein level). Expressed in choroid plexus (at protein level). Not strongly enriched in cerebral microvessels.

Its subcellular location is the cell membrane. It carries out the reaction 3,3',5'-triiodo-L-thyronine(out) = 3,3',5'-triiodo-L-thyronine(in). The enzyme catalyses L-thyroxine(out) = L-thyroxine(in). The catalysed reaction is L-thyroxine sulfate(out) = L-thyroxine sulfate(in). Mediates the Na(+)-independent high affinity transport of organic anions such as the thyroid hormones L-thyroxine (T4), L-thyroxine sulfate (T4S), and 3,3',5'-triiodo-L-thyronine (reverse T3, rT3) at the plasma membrane. Regulates T4 levels in different brain regions by transporting T4, and also by serving as an export pump for T4S, which is a source of T4 after hydrolysis by local sulfatases. Increases the access of these substrates to the intracellular sites where they are metabolized by the deiodinases. Other potential substrates, such as triiodothyronine (T3), 17-beta-glucuronosyl estradiol (17beta-estradiol 17-O-(beta-D-glucuronate)), estrone-3-sulfate (E1S) and sulfobromophthalein (BSP) are transported with much lower efficiency. Transports T4 and E1S in a pH-insensitive manner. Facilitates the transport of thyroid hormones across the blood-brain barrier and into glia and neuronal cells in the brain. The polypeptide is Solute carrier organic anion transporter family member 1C1 (SLCO1C1) (Homo sapiens (Human)).